The primary structure comprises 872 residues: Chaperone protein ClpB 2 (872 aa).

The Clp R domain maps to 6–148 (PNKFTEKAWE…AEIIKQIRGT (143 aa)). Repeat stretches follow at residues 9–73 (FTEK…IAQQ) and 85–148 (LGRS…IRGT). Residues 161 to 342 (ESLEKYGRDL…RRFQEVLVDE (182 aa)) form an NBD1 region. An ATP-binding site is contributed by 208–215 (GEPGVGKT). The tract at residues 343-551 (PNVLDTISIL…IAEIISKWTG (209 aa)) is linker. The stretch at 393–527 (IDLVDEAAAK…LETQLAEQQT (135 aa)) forms a coiled coil. The interval 561–772 (EKEKLLHLED…RVDETIIFHG (212 aa)) is NBD2. 611–618 (GPTGVGKT) is a binding site for ATP. The tract at residues 773–872 (LQKSELRSIV…TSLRGDLVIV (100 aa)) is C-terminal.

It belongs to the ClpA/ClpB family. As to quaternary structure, homohexamer. The oligomerization is ATP-dependent.

It localises to the cytoplasm. Its function is as follows. Part of a stress-induced multi-chaperone system, it is involved in the recovery of the cell from heat-induced damage, in cooperation with DnaK, DnaJ and GrpE. Acts before DnaK, in the processing of protein aggregates. Protein binding stimulates the ATPase activity; ATP hydrolysis unfolds the denatured protein aggregates, which probably helps expose new hydrophobic binding sites on the surface of ClpB-bound aggregates, contributing to the solubilization and refolding of denatured protein aggregates by DnaK. The protein is Chaperone protein ClpB 2 (clpB2) of Synechocystis sp. (strain ATCC 27184 / PCC 6803 / Kazusa).